A 182-amino-acid chain; its full sequence is Large ribosomal subunit protein uL16 (182 aa).

This sequence belongs to the universal ribosomal protein uL16 family.

The protein is Large ribosomal subunit protein uL16 of Thermococcus gammatolerans (strain DSM 15229 / JCM 11827 / EJ3).